A 408-amino-acid chain; its full sequence is Probable pectate lyase 5 (408 aa).

A signal peptide spans 1–27; it reads MRMTLVHLSLSLFSCLLLVLSPTFIAS. A glycan (N-linked (GlcNAc...) asparagine) is linked at N45. Ca(2+) is bound by residues D206, D230, and D234. R286 is an active-site residue.

This sequence belongs to the polysaccharide lyase 1 family. Ca(2+) serves as cofactor.

It carries out the reaction Eliminative cleavage of (1-&gt;4)-alpha-D-galacturonan to give oligosaccharides with 4-deoxy-alpha-D-galact-4-enuronosyl groups at their non-reducing ends.. Its pathway is glycan metabolism; pectin degradation; 2-dehydro-3-deoxy-D-gluconate from pectin: step 2/5. The sequence is that of Probable pectate lyase 5 from Arabidopsis thaliana (Mouse-ear cress).